We begin with the raw amino-acid sequence, 276 residues long: Diaminopimelate epimerase (276 aa).

Residues Asn-13, Gln-46, and Asn-66 each contribute to the substrate site. The active-site Proton donor is Cys-75. Residues 76–77 (GN), Asn-159, Asn-192, and 210–211 (ER) contribute to the substrate site. The active-site Proton acceptor is Cys-219. 220–221 (GT) is a binding site for substrate.

The protein belongs to the diaminopimelate epimerase family. Homodimer.

The protein localises to the cytoplasm. The catalysed reaction is (2S,6S)-2,6-diaminopimelate = meso-2,6-diaminopimelate. It functions in the pathway amino-acid biosynthesis; L-lysine biosynthesis via DAP pathway; DL-2,6-diaminopimelate from LL-2,6-diaminopimelate: step 1/1. Its function is as follows. Catalyzes the stereoinversion of LL-2,6-diaminopimelate (L,L-DAP) to meso-diaminopimelate (meso-DAP), a precursor of L-lysine and an essential component of the bacterial peptidoglycan. The sequence is that of Diaminopimelate epimerase from Pseudomonas entomophila (strain L48).